The following is a 68-amino-acid chain: Large ribosomal subunit protein bL32 (68 aa).

Positions 1–25 are disordered; the sequence is MAVPQNKITKSRRGQRRSHDALVAG.

Belongs to the bacterial ribosomal protein bL32 family.

The sequence is that of Large ribosomal subunit protein bL32 from Dinoroseobacter shibae (strain DSM 16493 / NCIMB 14021 / DFL 12).